We begin with the raw amino-acid sequence, 167 residues long: Ribosome maturation factor RimM (167 aa).

Positions 94-166 (DDRAWLHELE…YIHVPRFDEF (73 aa)) constitute a PRC barrel domain.

It belongs to the RimM family. Binds ribosomal protein uS19.

The protein localises to the cytoplasm. Its function is as follows. An accessory protein needed during the final step in the assembly of 30S ribosomal subunit, possibly for assembly of the head region. Essential for efficient processing of 16S rRNA. May be needed both before and after RbfA during the maturation of 16S rRNA. It has affinity for free ribosomal 30S subunits but not for 70S ribosomes. The protein is Ribosome maturation factor RimM of Chlorobium luteolum (strain DSM 273 / BCRC 81028 / 2530) (Pelodictyon luteolum).